We begin with the raw amino-acid sequence, 200 residues long: UPF0637 protein LCABL_14170 (200 aa).

Belongs to the UPF0637 family.

This is UPF0637 protein LCABL_14170 from Lacticaseibacillus casei (strain BL23) (Lactobacillus casei).